A 361-amino-acid chain; its full sequence is tRNA pseudouridine synthase D (361 aa).

The Nucleophile role is filled by aspartate 76. One can recognise a TRUD domain in the interval 151–318; that stretch reads GIPNYFGYQR…EQGSRRLAWI (168 aa).

Belongs to the pseudouridine synthase TruD family.

The enzyme catalyses uridine(13) in tRNA = pseudouridine(13) in tRNA. Functionally, responsible for synthesis of pseudouridine from uracil-13 in transfer RNAs. This Wolinella succinogenes (strain ATCC 29543 / DSM 1740 / CCUG 13145 / JCM 31913 / LMG 7466 / NCTC 11488 / FDC 602W) (Vibrio succinogenes) protein is tRNA pseudouridine synthase D.